A 195-amino-acid chain; its full sequence is Probable peroxygenase 4 (195 aa).

The 36-residue stretch at 14–49 (EEDNFLQRHVAFFDRNKDGIVYPSETFQGFRAIGCG) folds into the EF-hand domain. His-22 contacts heme. Ca(2+) is bound by residues Asp-27, Asn-29, Asp-31, and Glu-38. Positions 70 to 79 (PGKGFSIWFP) match the Proline-knot motif. Ser-177 carries the post-translational modification Phosphoserine.

Belongs to the caleosin family. Homodimer. Heme b is required as a cofactor. The cofactor is Ca(2+). Expressed in roots, leaves, stems, shoots, flowers and germinated seeds. Barely detected in dry seeds prior to germination. Preferentially expressed in vascular bundles and in guard cells.

It is found in the lipid droplet. It catalyses the reaction RH + ROOH = ROH + ROH.. In terms of biological role, calcium-binding peroxygenase involved in the degradation of storage lipid in oil bodies. May be involved in the interaction between oil bodies and vacuoles during seed germination. Acts as a negative regulator of abscisic acid responses in non-seed tissues. This Arabidopsis thaliana (Mouse-ear cress) protein is Probable peroxygenase 4 (PXG4).